Here is a 537-residue protein sequence, read N- to C-terminus: O-phosphoserine--tRNA(Cys) ligase (537 aa).

Substrate is bound by residues 186–188, 231–233, 273–274, and Asn-317; these read HMT, SAS, and YY.

Belongs to the class-II aminoacyl-tRNA synthetase family. O-phosphoseryl-tRNA(Cys) synthetase subfamily. In terms of assembly, homotetramer. Interacts with SepCysS.

It carries out the reaction tRNA(Cys) + O-phospho-L-serine + ATP = O-phospho-L-seryl-tRNA(Cys) + AMP + diphosphate. Catalyzes the attachment of O-phosphoserine (Sep) to tRNA(Cys). The chain is O-phosphoserine--tRNA(Cys) ligase from Methanococcus maripaludis (strain DSM 14266 / JCM 13030 / NBRC 101832 / S2 / LL).